The sequence spans 163 residues: Probable RNA-binding protein EIF1AD (163 aa).

One can recognise an S1-like domain in the interval 18 to 96 (MMEDDYELPT…VKAEISKILT (79 aa)). Positions 106-163 (AGIWPERFAKNPPQEAKAQNDDEDSDFEDDLTPNTNRPVQESDEEDEDTDTESSDEED) are disordered. Acidic residues-rich tracts occupy residues 126–136 (DDEDSDFEDDL) and 146–163 (ESDE…DEED).

Belongs to the EIF1AD family.

The protein is Probable RNA-binding protein EIF1AD of Drosophila pseudoobscura pseudoobscura (Fruit fly).